We begin with the raw amino-acid sequence, 352 residues long: Nicotinate-nucleotide--dimethylbenzimidazole phosphoribosyltransferase (352 aa).

Catalysis depends on Glu318, which acts as the Proton acceptor.

The protein belongs to the CobT family.

It carries out the reaction 5,6-dimethylbenzimidazole + nicotinate beta-D-ribonucleotide = alpha-ribazole 5'-phosphate + nicotinate + H(+). The protein operates within nucleoside biosynthesis; alpha-ribazole biosynthesis; alpha-ribazole from 5,6-dimethylbenzimidazole: step 1/2. In terms of biological role, catalyzes the synthesis of alpha-ribazole-5'-phosphate from nicotinate mononucleotide (NAMN) and 5,6-dimethylbenzimidazole (DMB). This chain is Nicotinate-nucleotide--dimethylbenzimidazole phosphoribosyltransferase, found in Dehalococcoides mccartyi (strain CBDB1).